The sequence spans 422 residues: MDLINELHQRNLIFHITNENKLKELIKNKYISLYCGFDPTEDSLHVGHLLPLITLKRFQVLGHKPIVLIGGATSLIGDPSFKTKERLLKSDSFVEKCTLKISQQISFFLDFNSNFNSAIILNNNLWFKKINILQFLRDVGKYFSVNALINREAVKKRIKRSDQGISFTEFSYNLLQAYDFFILNQKNQVSLQIGGSDQWGNISSGMHLIHRISKKEAYGLTLPLLMQSNGIKFGKTESGTVWLDPQKTTPYRFYQFWMNIEDSNVYRFLKLFTFIDIHEINEREKNSYKKNQIVSDKVLLAKHMTRLVHGDEKLSAAERITNILFFKNINDIQISDLEQLRKDGVPVVETYKIKDLQEALVLSSLAQSRTQAKNMIISNSISINTKKIVNKNYIIDDNDKLFNQFTLLSRGKKNHCLIYWNK.

Tyr-34 is an L-tyrosine binding site. Residues 39–48 (PTEDSLHVGH) carry the 'HIGH' region motif. The L-tyrosine site is built by Tyr-172 and Gln-176. The 'KMSKS' region motif lies at 232–236 (KFGKT). Lys-235 lines the ATP pocket. The region spanning 354–412 (KDLQEALVLSSLAQSRTQAKNMIISNSISINTKKIVNKNYIIDDNDKLFNQFTLLSRGK) is the S4 RNA-binding domain.

The protein belongs to the class-I aminoacyl-tRNA synthetase family. TyrS type 1 subfamily. As to quaternary structure, homodimer.

The protein resides in the cytoplasm. The enzyme catalyses tRNA(Tyr) + L-tyrosine + ATP = L-tyrosyl-tRNA(Tyr) + AMP + diphosphate + H(+). Catalyzes the attachment of tyrosine to tRNA(Tyr) in a two-step reaction: tyrosine is first activated by ATP to form Tyr-AMP and then transferred to the acceptor end of tRNA(Tyr). The protein is Tyrosine--tRNA ligase of Buchnera aphidicola subsp. Schizaphis graminum (strain Sg).